Here is a 253-residue protein sequence, read N- to C-terminus: Ribosomal RNA small subunit methyltransferase A (253 aa).

Residues His-12, Leu-14, Gly-39, Glu-60, Asp-81, and Asn-104 each contribute to the S-adenosyl-L-methionine site.

The protein belongs to the class I-like SAM-binding methyltransferase superfamily. rRNA adenine N(6)-methyltransferase family. RsmA subfamily.

It localises to the cytoplasm. It carries out the reaction adenosine(1518)/adenosine(1519) in 16S rRNA + 4 S-adenosyl-L-methionine = N(6)-dimethyladenosine(1518)/N(6)-dimethyladenosine(1519) in 16S rRNA + 4 S-adenosyl-L-homocysteine + 4 H(+). Functionally, specifically dimethylates two adjacent adenosines (A1518 and A1519) in the loop of a conserved hairpin near the 3'-end of 16S rRNA in the 30S particle. May play a critical role in biogenesis of 30S subunits. The polypeptide is Ribosomal RNA small subunit methyltransferase A (Paracidovorax citrulli (strain AAC00-1) (Acidovorax citrulli)).